Here is a 367-residue protein sequence, read N- to C-terminus: Quinolinate synthase (367 aa).

Residues histidine 46 and serine 63 each coordinate iminosuccinate. Position 110 (cysteine 110) interacts with [4Fe-4S] cluster. Iminosuccinate is bound by residues 141–143 and serine 162; that span reads YVN. Cysteine 229 is a binding site for [4Fe-4S] cluster. Iminosuccinate-binding positions include 255–257 and threonine 272; that span reads HPE. Residue cysteine 319 coordinates [4Fe-4S] cluster.

It belongs to the quinolinate synthase family. Type 3 subfamily. [4Fe-4S] cluster serves as cofactor.

The protein localises to the cytoplasm. It carries out the reaction iminosuccinate + dihydroxyacetone phosphate = quinolinate + phosphate + 2 H2O + H(+). The protein operates within cofactor biosynthesis; NAD(+) biosynthesis; quinolinate from iminoaspartate: step 1/1. In terms of biological role, catalyzes the condensation of iminoaspartate with dihydroxyacetone phosphate to form quinolinate. The polypeptide is Quinolinate synthase (Bacillus velezensis (strain DSM 23117 / BGSC 10A6 / LMG 26770 / FZB42) (Bacillus amyloliquefaciens subsp. plantarum)).